Consider the following 678-residue polypeptide: Serine/threonine-protein kinase PLK (678 aa).

The 288-residue stretch at 22 to 309 (YRPGKLLGKG…VKECLDHSWL (288 aa)) folds into the Protein kinase domain. Residues 28–36 (LGKGGFAYV) and lysine 51 each bind ATP. The Proton acceptor role is filled by aspartate 145. Threonine 179 and threonine 183 each carry phosphothreonine; by autocatalysis. 2 consecutive POLO box domains span residues 435-516 (YIMS…YLEN) and 563-644 (FLKK…IIKA). The disordered stretch occupies residues 658–678 (KDSTKKSASGSSTRQLGQGGE). Polar residues predominate over residues 663 to 678 (KSASGSSTRQLGQGGE).

Belongs to the protein kinase superfamily. Ser/Thr protein kinase family. CDC5/Polo subfamily. As to quaternary structure, interacts with Kin-13. Autophosphorylated. Autophosphorylation is critical for its function in cell growth, cytokinesis and formation of flagella.

The protein resides in the cell projection. The protein localises to the cilium. Its subcellular location is the flagellum. It localises to the cytoplasm. It is found in the cytoskeleton. The protein resides in the flagellum basal body. The protein localises to the flagellum axoneme. Its subcellular location is the spindle. It localises to the membrane. The enzyme catalyses L-seryl-[protein] + ATP = O-phospho-L-seryl-[protein] + ADP + H(+). The catalysed reaction is L-threonyl-[protein] + ATP = O-phospho-L-threonyl-[protein] + ADP + H(+). Its activity is regulated as follows. Inhibited by GW843286X (GW), an ATP-competitive inhibitor. Inhibition leads to reduced growth, increased number of cells with more than four nuclei, increased number of cells with condensed nuclei, cell cycle arrest at G2/M or G1/S phase depending on the treatment time with GW, and increased length of membrane-bound portions of the caudal and anterior flagella. Functionally, involved in cell cycle. Involved in cell division. Involved in cytokinesis. Involved in flagella biogenesis and in regulation of flagella length in interphase. Involved in formation of median bodies during interphase. Phosphorylates Kin-13 in vitro. Likely regulates microtubule (MT) depolymerizing activity of Kin-13. This chain is Serine/threonine-protein kinase PLK, found in Giardia intestinalis (strain ATCC 50803 / WB clone C6) (Giardia lamblia).